The chain runs to 312 residues: tRNA uridine(34) hydroxylase (312 aa).

In terms of domain architecture, Rhodanese spans 124–218 (SDPEVLLIDT…YLEEVPQEQT (95 aa)). Cysteine 178 serves as the catalytic Cysteine persulfide intermediate. Composition is skewed to basic and acidic residues over residues 279-294 (TRES…ELAR) and 302-312 (IGRDPRQLNEA). The segment at 279–312 (TRESARERQKQIELARARNQPHPIGRDPRQLNEA) is disordered.

This sequence belongs to the TrhO family.

The enzyme catalyses uridine(34) in tRNA + AH2 + O2 = 5-hydroxyuridine(34) in tRNA + A + H2O. Functionally, catalyzes oxygen-dependent 5-hydroxyuridine (ho5U) modification at position 34 in tRNAs. This is tRNA uridine(34) hydroxylase from Ectopseudomonas mendocina (strain ymp) (Pseudomonas mendocina).